The following is a 571-amino-acid chain: MISGILASPGIAFGTALLLKEDEIVINRKIINIKNITKEIERFFEGRRKSIQQLTEIKTKTKEKFGEKKESIFEGHIMLLEDEELEQEVISLIKEKNMSAAAATELIIEGQAKALEKLKDEYLKNRAIDVRDIGNRLLKNILNLNIIDLNNINNEVILIAKDLTPSETAQINLKYILGFITDLGSRTSHTSIMARSLEIPAIVGTGNITKIVKNNDFIILDSINNQILINPSHKLINQTEVIKKKYLTKKNQLINLKNLQAITTDGHAIKIGSNIGNVEDIKSAKKNGAECIGLYRTEFLFMGRNCLPDENEQFQAYKTIAELMKNKSVIIRTMDIGGDKDLPYMNLPKEENPFLGWRAIRISMDRKEILHTQLNAILRASAFGKIYILFPMIISVEEIRILKSEVRKLQIQLKNNNIPFDKNIKIGIMIETPASAIIAEYLIKEVDFFSIGTNDLTQYTLAVDRGNDLISHLYNPMNPSVLKLIQQVINVSHTHGKWTGMCGELAGDERATILLLGMGLDEFSMSSISIPKIKEIIRKTSFSSAKKLAQKALTLPTNREILNLVENFVNH.

His189 functions as the Tele-phosphohistidine intermediate in the catalytic mechanism. 2 residues coordinate phosphoenolpyruvate: Arg296 and Arg332. Positions 431 and 455 each coordinate Mg(2+). Phosphoenolpyruvate is bound by residues 454 to 455 (ND) and Arg465. The active-site Proton donor is Cys502.

It belongs to the PEP-utilizing enzyme family. As to quaternary structure, homodimer. Mg(2+) is required as a cofactor.

Its subcellular location is the cytoplasm. The enzyme catalyses L-histidyl-[protein] + phosphoenolpyruvate = N(pros)-phospho-L-histidyl-[protein] + pyruvate. In terms of biological role, general (non sugar-specific) component of the phosphoenolpyruvate-dependent sugar phosphotransferase system (sugar PTS). This major carbohydrate active-transport system catalyzes the phosphorylation of incoming sugar substrates concomitantly with their translocation across the cell membrane. Enzyme I transfers the phosphoryl group from phosphoenolpyruvate (PEP) to the phosphoryl carrier protein (HPr). The sequence is that of Phosphoenolpyruvate-protein phosphotransferase (ptsI) from Buchnera aphidicola subsp. Acyrthosiphon pisum (strain APS) (Acyrthosiphon pisum symbiotic bacterium).